A 398-amino-acid chain; its full sequence is tRNA N6-adenosine threonylcarbamoyltransferase (398 aa).

H162, H166, and Y183 together coordinate a divalent metal cation. Residues 183–187 (YVSGG), D215, G230, E234, and N329 each bind substrate. Residue D357 participates in a divalent metal cation binding.

It belongs to the KAE1 / TsaD family. In terms of assembly, component of the EKC/KEOPS complex composed of at least BUD32, CGI121, GON7, KAE1 and PCC1; the whole complex dimerizes. A divalent metal cation is required as a cofactor.

It localises to the cytoplasm. It is found in the nucleus. The catalysed reaction is L-threonylcarbamoyladenylate + adenosine(37) in tRNA = N(6)-L-threonylcarbamoyladenosine(37) in tRNA + AMP + H(+). Its function is as follows. Component of the EKC/KEOPS complex that is required for the formation of a threonylcarbamoyl group on adenosine at position 37 (t(6)A37) in tRNAs that read codons beginning with adenine. The complex is probably involved in the transfer of the threonylcarbamoyl moiety of threonylcarbamoyl-AMP (TC-AMP) to the N6 group of A37. KAE1 likely plays a direct catalytic role in this reaction, but requires other protein(s) of the complex to fulfill this activity. The EKC/KEOPS complex also promotes both telomere uncapping and telomere elongation. The complex is required for efficient recruitment of transcriptional coactivators. The chain is tRNA N6-adenosine threonylcarbamoyltransferase from Cryptococcus neoformans var. neoformans serotype D (strain B-3501A) (Filobasidiella neoformans).